The chain runs to 332 residues: Stage II sporulation protein B (332 aa).

The span at 1–10 (MKKRKNKKNS) shows a compositional bias: basic residues. The tract at residues 1 to 71 (MKKRKNKKNS…EHPDEDEFNW (71 aa)) is disordered. Positions 11-27 (KAAEKALKVTINGKEET) are enriched in basic and acidic residues. The helical transmembrane segment at 112-132 (AATIAFAAVIGTGLGLFALNI) threads the bilayer. The interval 139-174 (SAPASLEDSLGSQTAKAGDTSADKQTSGAEKQAAQT) is disordered. Over residues 161 to 174 (DKQTSGAEKQAAQT) the composition is skewed to polar residues. The 76-residue stretch at 175–250 (EGTYKTYAVQ…SDFEAWGGKE (76 aa)) folds into the SPOR domain.

The protein localises to the cell membrane. Appears to be degraded early in engulfment, in correlation with its loss from polar septa. In terms of biological role, facilitates the rapid and spatially regulated dissolution of septal peptidoglycan. This chain is Stage II sporulation protein B, found in Bacillus subtilis (strain 168).